The sequence spans 204 residues: Ribonuclease HII (204 aa).

An RNase H type-2 domain is found at 13-204 (GPVAGCDEAG…VRRAARLHSS (192 aa)). A divalent metal cation contacts are provided by D19, E20, and D113.

Belongs to the RNase HII family. The cofactor is Mn(2+). Mg(2+) is required as a cofactor.

It localises to the cytoplasm. The enzyme catalyses Endonucleolytic cleavage to 5'-phosphomonoester.. Endonuclease that specifically degrades the RNA of RNA-DNA hybrids. This is Ribonuclease HII from Cutibacterium acnes (strain DSM 16379 / KPA171202) (Propionibacterium acnes).